The primary structure comprises 62 residues: Large ribosomal subunit protein bL28 (62 aa).

The segment at 1–22 is disordered; sequence MGKQCFVTGRKASTGNRRSHAL.

The protein belongs to the bacterial ribosomal protein bL28 family.

This is Large ribosomal subunit protein bL28 from Staphylococcus aureus (strain N315).